Here is an 88-residue protein sequence, read N- to C-terminus: Apolipoprotein C-I (88 aa).

The signal sequence occupies residues 1–26 (MRLLLSLPVLLVALSVVLERPAPAQA).

Belongs to the apolipoprotein C1 family.

The protein resides in the secreted. Inhibitor of lipoprotein binding to the low density lipoprotein (LDL) receptor, LDL receptor-related protein, and very low density lipoprotein (VLDL) receptor. Associates with high density lipoproteins (HDL) and the triacylglycerol-rich lipoproteins in the plasma and makes up about 10% of the protein of the VLDL and 2% of that of HDL. Appears to interfere directly with fatty acid uptake and is also the major plasma inhibitor of cholesteryl ester transfer protein (CETP). Binds free fatty acids and reduces their intracellular esterification. Modulates the interaction of APOE with beta-migrating VLDL and inhibits binding of beta-VLDL to the LDL receptor-related protein. The polypeptide is Apolipoprotein C-I (APOC1) (Tupaia glis (Common tree shrew)).